The primary structure comprises 231 residues: Ribonuclease 3 (231 aa).

The RNase III domain occupies 12–139; it reads LKAFLQKNNI…LIAAIYLDQG (128 aa). Glutamate 52 is a Mg(2+) binding site. Aspartate 56 is an active-site residue. Mg(2+) is bound by residues aspartate 125 and glutamate 128. Residue glutamate 128 is part of the active site. The DRBM domain maps to 165–231; it reads DPKSELQEYF…AANALSKLKT (67 aa).

It belongs to the ribonuclease III family. In terms of assembly, homodimer. Requires Mg(2+) as cofactor.

Its subcellular location is the cytoplasm. The catalysed reaction is Endonucleolytic cleavage to 5'-phosphomonoester.. Functionally, digests double-stranded RNA. Involved in the processing of primary rRNA transcript to yield the immediate precursors to the large and small rRNAs (23S and 16S). Processes some mRNAs, and tRNAs when they are encoded in the rRNA operon. Processes pre-crRNA and tracrRNA of type II CRISPR loci if present in the organism. This chain is Ribonuclease 3, found in Mycoplasmopsis synoviae (strain 53) (Mycoplasma synoviae).